The primary structure comprises 1275 residues: Inner capsid protein lambda-1 (1275 aa).

The span at 1–12 (MKRIPRKTRGKS) shows a compositional bias: basic residues. The tract at residues 1 to 147 (MKRIPRKTRG…NVDNEGGDNQ (147 aa)) is disordered. The span at 18–35 (DSTERADDGSAQLRDKQS) shows a compositional bias: basic and acidic residues. Residues 55 to 66 (TRPSLQTVQKAT) show a composition bias toward polar residues. 2 stretches are compositionally biased toward basic and acidic residues: residues 80–98 (AVDK…HVEA) and 105–117 (ATKR…DKQK). The span at 118–139 (AQVTYNDTGINNANELSRSGNV) shows a compositional bias: polar residues. Residues 181–203 (YQCHVCSAVLFSPLDLDAHVASH) form a C2H2-type zinc finger.

This sequence belongs to the turreted BTV-fold inner capsid family. Homodecamer; each decamer is made up of two conformers of VP2, called VP2A and VP2B. 12 homodecamers assemble to form an icosahedral capsid. Interacts with protein mu-NS; in viral inclusions. Mg(2+) serves as cofactor. Requires Mn(2+) as cofactor.

The protein resides in the virion. It carries out the reaction ATP + H2O = ADP + phosphate + H(+). Functionally, inner capsid protein that self-assembles to form an icosahedral capsid with a T=2 symmetry, which consists of 120 copies of VP2, with channels at each of its five-fold vertices. This capsid constitutes the innermost concentric layer of the viral mature particle. Its function is as follows. Displays NTPase, RNA 5'-triphosphatase (RTPase) and RNA helicase activities and probably participates in transcription of the viral genome. Helicase activity might be involved in unwinding or reannealing dsRNA during RNA synthesis. RTPase enzymatic activity represents the first step in RNA capping, which yields a 5'-diphosphorylated plus-strand RNA. This Reovirus type 2 (strain D5/Jones) (T2J) protein is Inner capsid protein lambda-1.